The sequence spans 369 residues: Large ribosomal subunit protein uL4 (369 aa).

Position 2 is an N-acetylthreonine (T2).

Belongs to the universal ribosomal protein uL4 family.

This is Large ribosomal subunit protein uL4 (rpl4) from Dictyostelium discoideum (Social amoeba).